We begin with the raw amino-acid sequence, 1578 residues long: Pentafunctional AROM polypeptide (1578 aa).

Positions 1–393 are 3-dehydroquinate synthase; sequence MSVELAKVSI…YGTSAHVVSD (393 aa). NAD(+)-binding positions include 44 to 46, 79 to 82, 110 to 112, and Asp-115; these read DTN, EAHK, and GGV. Arg-126 lines the 7-phospho-2-dehydro-3-deoxy-D-arabino-heptonate pocket. 135 to 136 contacts NAD(+); sequence TS. 7-phospho-2-dehydro-3-deoxy-D-arabino-heptonate-binding residues include Asp-142 and Lys-148. Residue Lys-157 coordinates NAD(+). Asn-158 contributes to the 7-phospho-2-dehydro-3-deoxy-D-arabino-heptonate binding site. NAD(+) contacts are provided by residues 175-178 and Asn-186; that span reads WLET. Position 190 (Glu-190) interacts with Zn(2+). 7-phospho-2-dehydro-3-deoxy-D-arabino-heptonate contacts are provided by residues 190-193 and Lys-259; that span reads EVIK. Glu-269 functions as the Proton acceptor; for 3-dehydroquinate synthase activity in the catalytic mechanism. Residues 273 to 277 and His-280 contribute to the 7-phospho-2-dehydro-3-deoxy-D-arabino-heptonate site; that span reads RNLLN. His-280 contributes to the Zn(2+) binding site. His-284 functions as the Proton acceptor; for 3-dehydroquinate synthase activity in the catalytic mechanism. The 7-phospho-2-dehydro-3-deoxy-D-arabino-heptonate site is built by His-296 and Lys-365. His-296 serves as a coordination point for Zn(2+). Residues 406–863 are EPSP synthase; the sequence is VHPFNNIPEG…WDVLHSQLGA (458 aa). Cys-845 acts as the For EPSP synthase activity in catalysis. The shikimate kinase stretch occupies residues 882-1071; it reads VVIIGMRAAG…VPSRRSAFVC (190 aa). 886-893 is an ATP binding site; that stretch reads GMRAAGKS. The interval 1072-1284 is 3-dehydroquinase; it reads LTFEDLSDHL…AAPGQLTLAE (213 aa). His-1189 serves as the catalytic Proton acceptor; for 3-dehydroquinate dehydratase activity. Lys-1218 functions as the Schiff-base intermediate with substrate; for 3-dehydroquinate dehydratase activity in the catalytic mechanism. The tract at residues 1297–1578 is shikimate dehydrogenase; the sequence is AKKFFVIGSP…KAIFDAVTQE (282 aa).

This sequence in the N-terminal section; belongs to the sugar phosphate cyclases superfamily. Dehydroquinate synthase family. It in the 2nd section; belongs to the EPSP synthase family. The protein in the 3rd section; belongs to the shikimate kinase family. In the 4th section; belongs to the type-I 3-dehydroquinase family. This sequence in the C-terminal section; belongs to the shikimate dehydrogenase family. Homodimer. Zn(2+) is required as a cofactor.

The protein localises to the cytoplasm. The enzyme catalyses 7-phospho-2-dehydro-3-deoxy-D-arabino-heptonate = 3-dehydroquinate + phosphate. It carries out the reaction 3-dehydroquinate = 3-dehydroshikimate + H2O. The catalysed reaction is shikimate + NADP(+) = 3-dehydroshikimate + NADPH + H(+). It catalyses the reaction shikimate + ATP = 3-phosphoshikimate + ADP + H(+). The enzyme catalyses 3-phosphoshikimate + phosphoenolpyruvate = 5-O-(1-carboxyvinyl)-3-phosphoshikimate + phosphate. It functions in the pathway metabolic intermediate biosynthesis; chorismate biosynthesis; chorismate from D-erythrose 4-phosphate and phosphoenolpyruvate: step 2/7. Its pathway is metabolic intermediate biosynthesis; chorismate biosynthesis; chorismate from D-erythrose 4-phosphate and phosphoenolpyruvate: step 3/7. It participates in metabolic intermediate biosynthesis; chorismate biosynthesis; chorismate from D-erythrose 4-phosphate and phosphoenolpyruvate: step 4/7. The protein operates within metabolic intermediate biosynthesis; chorismate biosynthesis; chorismate from D-erythrose 4-phosphate and phosphoenolpyruvate: step 5/7. It functions in the pathway metabolic intermediate biosynthesis; chorismate biosynthesis; chorismate from D-erythrose 4-phosphate and phosphoenolpyruvate: step 6/7. In terms of biological role, the AROM polypeptide catalyzes 5 consecutive enzymatic reactions in prechorismate polyaromatic amino acid biosynthesis. This is Pentafunctional AROM polypeptide from Kluyveromyces lactis (strain ATCC 8585 / CBS 2359 / DSM 70799 / NBRC 1267 / NRRL Y-1140 / WM37) (Yeast).